A 110-amino-acid chain; its full sequence is uncharacterized protein (110 aa).

A run of 2 helical transmembrane segments spans residues 6 to 26 and 38 to 58; these read VSLY…IYNV and TSGP…IIGP.

Its subcellular location is the membrane. This is an uncharacterized protein from Saccharomyces cerevisiae (strain ATCC 204508 / S288c) (Baker's yeast).